Here is a 224-residue protein sequence, read N- to C-terminus: Ribosomal RNA small subunit methyltransferase G (224 aa).

Residues glycine 89, leucine 94, 140–141 (IE), and arginine 154 each bind S-adenosyl-L-methionine.

The protein belongs to the methyltransferase superfamily. RNA methyltransferase RsmG family.

Its subcellular location is the cytoplasm. The enzyme catalyses guanosine(527) in 16S rRNA + S-adenosyl-L-methionine = N(7)-methylguanosine(527) in 16S rRNA + S-adenosyl-L-homocysteine. Functionally, specifically methylates the N7 position of guanine in position 527 of 16S rRNA. The polypeptide is Ribosomal RNA small subunit methyltransferase G (Bordetella avium (strain 197N)).